A 456-amino-acid polypeptide reads, in one-letter code: MTAAQLFALSPLAALAIGAVIAMLLAPVTKSAAAARIAAATGLAVAALLEILRAGVPPAPIGALFTDDGLARYGTAYAALFGLAALVFLRVAGVAKEAPALVALVALGAASLTGAGHAATLFLGLELISLSLIALFAFPLTGMALEASYKFLVMSGLATSAQLLGVALIYAETGALDFPGWVGHGPLFALGTALLLAGLAFKFSLAPFHMWTPDAFQGAPAGAAALAGVVSKAAVAIAILRLNSEAQLPQPLWSAGLATLGAASVLVGNVLALRQQLLPRMLGYSTIAHSGYIAMILASGAPGTNEAVLFYLGIYAPALTATLCASAMLGPAPMLEDLRGLARKRPLEATSLSVGLLSLAGLPVAGGFVAKLYLFKALVQSESWILLAIAMVGAALGFYYYIRFFTAPFFGHGGIEPAPRHRFDRLLLIFCFGLIMLFGFEPLVLITAVNSALAVR.

The next 14 helical transmembrane spans lie at 6 to 26 (LFAL…MLLA), 45 to 65 (VAAL…GALF), 75 to 95 (TAYA…AGVA), 97 to 117 (EAPA…GAGH), 118 to 138 (AATL…LFAF), 151 to 171 (FLVM…LIYA), 181 to 201 (WVGH…GLAF), 220 to 240 (PAGA…IAIL), 252 to 272 (LWSA…NVLA), 281 to 301 (MLGY…ASGA), 308 to 328 (VLFY…ASAM), 355 to 375 (GLLS…LYLF), 382 to 402 (ESWI…YYYI), and 426 to 446 (LLLI…LVLI).

It belongs to the complex I subunit 2 family. NDH-1 is composed of 14 different subunits. Subunits NuoA, H, J, K, L, M, N constitute the membrane sector of the complex.

The protein resides in the cell inner membrane. The catalysed reaction is a quinone + NADH + 5 H(+)(in) = a quinol + NAD(+) + 4 H(+)(out). Its function is as follows. NDH-1 shuttles electrons from NADH, via FMN and iron-sulfur (Fe-S) centers, to quinones in the respiratory chain. The immediate electron acceptor for the enzyme in this species is believed to be ubiquinone. Couples the redox reaction to proton translocation (for every two electrons transferred, four hydrogen ions are translocated across the cytoplasmic membrane), and thus conserves the redox energy in a proton gradient. In Rhodopseudomonas palustris (strain BisA53), this protein is NADH-quinone oxidoreductase subunit N.